The sequence spans 475 residues: Sulfate adenylyltransferase subunit 1 (475 aa).

The region spanning 25-239 is the tr-type G domain; the sequence is KSLLRFLTCG…EVLETVEIQR (215 aa). The segment at 34–41 is G1; the sequence is GSVDDGKS. 34–41 is a binding site for GTP; that stretch reads GSVDDGKS. The interval 92–96 is G2; the sequence is GITID. The segment at 113-116 is G3; that stretch reads DTPG. GTP is bound by residues 113-117 and 168-171; these read DTPGH and NKMD. Residues 168–171 are G4; that stretch reads NKMD. Positions 206–208 are G5; it reads SAL.

It belongs to the TRAFAC class translation factor GTPase superfamily. Classic translation factor GTPase family. CysN/NodQ subfamily. In terms of assembly, heterodimer composed of CysD, the smaller subunit, and CysN.

It carries out the reaction sulfate + ATP + H(+) = adenosine 5'-phosphosulfate + diphosphate. Its pathway is sulfur metabolism; hydrogen sulfide biosynthesis; sulfite from sulfate: step 1/3. Its function is as follows. With CysD forms the ATP sulfurylase (ATPS) that catalyzes the adenylation of sulfate producing adenosine 5'-phosphosulfate (APS) and diphosphate, the first enzymatic step in sulfur assimilation pathway. APS synthesis involves the formation of a high-energy phosphoric-sulfuric acid anhydride bond driven by GTP hydrolysis by CysN coupled to ATP hydrolysis by CysD. This is Sulfate adenylyltransferase subunit 1 from Escherichia coli (strain SE11).